The following is a 925-amino-acid chain: MTSNERILQPFTLPNGTELKNRLLMAPMTTCTGYFDGTVTSELVEYYRARAGSIGTIIVECCFIDDYGLAFPGAIGIDNDEKIAGLAKIAEAIKAQGSKAILQIYHGGRMVDPQLIGGRQPVAPSAIAAPREGAAMPRALSGEEVEGMIAKFGDGVRRAILAGFDGVEIHGANTYLIQQFYSPNSNQRDDEWGGSRDNRARFPLAVLDITHKMARQYADDAFIIGYRFSPEEMEVPGIRFDDTMYLLEKLAARGVDYLHFSVGATLRPSIVDTSDPTPLIEKYCAMRSETLAQVPVMGVGGVVNVADAELGLDHGYDLIAVGRACIAYPDWAARIAAGEELELFIDSTQREALHIPEPLWRFSLVEAMIRDMSMGDAKFKPGMFVETVQDDANELVINVSLENDHIADIELAASPVQTVEFTTSFEEIRERILTANTPHVDAISGATSQSEAVKKAVAKAMLKSSKALAAEEGGNDAAPKSYDVVVVGSGGAGLAAAIQAHDEGASVLIVEKMPTIGGNTIKASAGMNAAETRFQRVKGIQDSKELFYQETLKGGHNKNNPQLLRRFVENAPQAIEWLADRGIMLNDITTTGGMSIDRTHRPRDGSAVGGYLISGLVRNITKRGIDVLLDTSVEEILMSGDEVSGVRLVNDEKEVIEVQTKSIVVATGGFSANSAMVVKYRPDLDGFVTTNHKGATGSGIALLERIGAGTVDMGEIQIHPTVEQQTSYLISESIRGGGAILVNQQGNRFFNEMETRDKVSAAIIALPEHYAYIVFDEHVRAKNKAADEYIAKGFVTSASSPRELAEKLGMDYHAFLATLECYNGAVEKQHDEQFGRTTALRAPINEGPFHAIRIAPGVHHTMGGVTINTDGEVLNVDQQPIRGAYAAGEVVGGIHGGNRIGGNAVADIIIFGTLAGHQAAKRARG.

Thr-447 is subject to FMN phosphoryl threonine. Positions 492, 511, 519, 520, 525, 526, and 633 each coordinate FAD. Ala-525 lines the fumarate pocket. A succinate-binding site is contributed by Ala-525. Succinate is bound by residues His-719, Ser-731, and Glu-732. 2 residues coordinate fumarate: Ser-731 and Glu-732. Arg-756 (proton donor) is an active-site residue. Fumarate is bound at residue His-859. His-859 serves as a coordination point for succinate. 2 residues coordinate FAD: His-860 and Glu-889. Residues Arg-899 and Gly-902 each contribute to the fumarate site. 2 residues coordinate succinate: Arg-899 and Gly-902. 2 residues coordinate FAD: Ala-904 and Val-905.

Belongs to the FAD-dependent oxidoreductase 2 family. FRD/SDH subfamily. As to quaternary structure, monomer. FAD is required as a cofactor. It depends on FMN as a cofactor. Is flavinylated on Thr-447 by ApbE2, encoded in a neighboring gene. Flavinylation is essential for catalytic activity.

The protein resides in the cytoplasm. The catalysed reaction is succinate + NAD(+) = fumarate + NADH + H(+). Its function is as follows. Catalyzes the anaerobic reduction of fumarate to succinate. Uses NADH as the inherent electron donor in this process. Is involved in anaerobic fumarate respiration in K.pneumoniae. This Klebsiella pneumoniae (strain 342) protein is NADH:fumarate oxidoreductase.